The following is a 315-amino-acid chain: Secreted mono- and diacylglycerol lipase LIP2 (315 aa).

The first 21 residues, 1–21, serve as a signal peptide directing secretion; it reads MACFRVILYLSVIFFVQCVFA. Cys68 and Cys308 are disulfide-bonded. Asn74 is a glycosylation site (N-linked (GlcNAc...) asparagine). Ser182 serves as the catalytic Nucleophile. Residue Asp240 is part of the active site. Residue Asn265 is glycosylated (N-linked (GlcNAc...) asparagine). His292 is an active-site residue.

It belongs to the AB hydrolase superfamily. Lipase family. Class 3 subfamily.

The protein resides in the secreted. It catalyses the reaction a monoacylglycerol + H2O = glycerol + a fatty acid + H(+). It carries out the reaction a diacylglycerol + H2O = a monoacylglycerol + a fatty acid + H(+). Its function is as follows. Secreted lipase involved in Dandruff and seborrheic dermatitis (D/SD) probably via lipase-mediated breakdown of sebaceous lipids and release of irritating free fatty acids. Shows activity against monoglyceride and diglyceride substrates and generates free oleic acid from the substrates mono- and diolein. Able to cleave the oleic acid from both the 1 and the 2 position of the glycerol backbone as 1,2 isomers of diolein were converted into oleic acid and glycerol. Due to an absence of fatty acid synthase genes in Malassezia species, secretory lipases are essential for the yeast to generate free fatty acids from degradation of sebum and assimilate them as lipid sources for growth. Plays an essential role at the pathogen-host interface during disease progression. Also performs the reverse reaction to build diacylglycerols from monoacylglycerols. This chain is Secreted mono- and diacylglycerol lipase LIP2, found in Malassezia restricta (strain ATCC 96810 / NBRC 103918 / CBS 7877) (Seborrheic dermatitis infection agent).